A 143-amino-acid polypeptide reads, in one-letter code: Large ribosomal subunit protein uL13 (143 aa).

Belongs to the universal ribosomal protein uL13 family. In terms of assembly, part of the 50S ribosomal subunit.

This protein is one of the early assembly proteins of the 50S ribosomal subunit, although it is not seen to bind rRNA by itself. It is important during the early stages of 50S assembly. This Solibacter usitatus (strain Ellin6076) protein is Large ribosomal subunit protein uL13.